The sequence spans 1254 residues: Structural polyprotein (1254 aa).

The tract at residues 1–33 (MFPFQPMYPMQPMPYRNPFAAPRRPWFPRTDPF) is necessary for nucleocapsid assembly and virus assembly. A host transcription inhibition region spans residues 33–68 (FLAMQVQELTRSMANLTFKQRRDAPPEGPSAKKPKK). The Supraphysiological nuclear export signal signature appears at 41-48 (LTRSMANL). The tract at residues 45 to 119 (MANLTFKQRR…KKPGKRQRMV (75 aa)) is disordered. The short motif at 64 to 68 (KKPKK) is the Nuclear localization signal element. The segment covering 80–92 (GKKKKNQGKKKAK) has biased composition (basic residues). Residues 91–127 (AKTGPPNPKAQNGNKKKTNKKPGKRQRMVMKLESDKT) are binding to the viral RNA. Threonine 93 and threonine 108 each carry phosphothreonine. A compositionally biased stretch (basic residues) spans 104–118 (NKKKTNKKPGKRQRM). Residues 112 to 126 (PGKRQRMVMKLESDK) form a ribosome-binding region. Serine 124 bears the Phosphoserine mark. One can recognise a Peptidase S3 domain in the interval 126–275 (KTFPIMLEGK…KYTPENCEQW (150 aa)). Residue threonine 127 is modified to Phosphothreonine. Active-site charge relay system residues include histidine 152, aspartate 174, and serine 226. The segment at 276-287 (SLVTTMCLLANV) is functions as an uncleaved signal peptide for the precursor of protein E3/E2. The Extracellular portion of the chain corresponds to 276–701 (SLVTTMCLLA…HYYHRYPMST (426 aa)). Residues asparagine 286, asparagine 546, and asparagine 652 are each glycosylated (N-linked (GlcNAc...) asparagine; by host). Residues 702–722 (ILGLSICAAIATVSVAASTWL) form a helical membrane-spanning segment. The Cytoplasmic segment spans residues 723–757 (FCRSRVACLTPYRLTPNARIPFCLAVLCCARTARA). S-palmitoyl cysteine; by host attachment occurs at residues cysteine 730, cysteine 750, and cysteine 751. The segment at 730-750 (CLTPYRLTPNARIPFCLAVLC) is transient transmembrane before p62-6K protein processing. The Extracellular segment spans residues 758–772 (ETTWESLDHLWNNNQ). A helical transmembrane segment spans residues 773–793 (QMFWIQLLIPLAALIVVTRLL). Residues 794–795 (RC) lie on the Cytoplasmic side of the membrane. Residues 796 to 816 (VCCVVPFLVMAGAAAGAYEHA) form a helical membrane-spanning segment. The Extracellular segment spans residues 817 to 1224 (TTMPSQAGIS…SKTAWTWLTS (408 aa)). 4 disulfides stabilise this stretch: cysteine 861/cysteine 926, cysteine 874/cysteine 906, cysteine 875/cysteine 908, and cysteine 880/cysteine 890. The segment at 896–913 (VYPFMWGGAYCFCDTENT) is E1 fusion peptide loop. N-linked (GlcNAc...) asparagine; by host glycosylation is present at asparagine 946. 4 disulfides stabilise this stretch: cysteine 1071/cysteine 1083, cysteine 1113/cysteine 1188, cysteine 1118/cysteine 1192, and cysteine 1140/cysteine 1182. A helical transmembrane segment spans residues 1225-1245 (LLGGSAVIIIIGLVLATIVAM). The Cytoplasmic portion of the chain corresponds to 1246 to 1254 (YVLTNQKHN).

Homodimer. Homomultimer. Interacts with host karyopherin KPNA4; this interaction allows the nuclear import of the viral capsid protein. Interacts with spike glycoprotein E2. Interacts with host IRAK1; the interaction leads to inhibition of IRAK1-dependent signaling. Part of a tetrameric complex composed of host CRM1, host importin alpha/beta dimer and the viral capsid; this complex blocks the receptor-mediated transport through the nuclear pore. Interacts with host phosphatase PPP1CA; this interaction dephosphorylates the capsid protein, which increases its ability to bind to the viral genome. In terms of assembly, the precursor of protein E3/E2 and E1 form a heterodimer shortly after synthesis. As to quaternary structure, interacts with spike glycoprotein E2. The precursor of protein E3/E2 and E1 form a heterodimer shortly after synthesis. Processing of the precursor of protein E3/E2 into E2 and E3 results in a heterodimer of the spike glycoproteins E2 and E1. Spike at virion surface are constituted of three E2-E1 heterodimers. After target cell attachment and endocytosis, E1 change conformation to form homotrimers. Interacts with 6K protein. Interacts with host LDLRAD3; this interaction mediates viral entry to the host cell. Interacts with spike glycoprotein E1. Processing of the precursor of protein E3/E2 into E2 and E3 results in a heterodimer of the spike glycoproteins E2 and E1. Spike at virion surface are constituted of a trimer of E2-E1 heterodimers. Interacts with 6K protein. Interacts with host LDLRAD3; this interaction mediates viral entry to the host cell. In terms of assembly, oligomer. Interacts with spike glycoprotein E1. Interacts with spike glycoprotein E2. In terms of processing, structural polyprotein: Specific enzymatic cleavages in vivo yield mature proteins. Capsid protein is auto-cleaved during polyprotein translation, unmasking a signal peptide at the N-terminus of the precursor of E3/E2. The remaining polyprotein is then targeted to the host endoplasmic reticulum, where host signal peptidase cleaves it into pE2, 6K and E1 proteins. pE2 is further processed to mature E3 and E2 by host furin in trans-Golgi vesicle. Palmitoylated via thioester bonds. These palmitoylations may induce disruption of the C-terminus transmembrane. This would result in the reorientation of E2 C-terminus from lumenal to cytoplasmic side. Post-translationally, phosphorylated on serine and threonine residues. In terms of processing, N-glycosylated. Palmitoylated via thioester bonds.

Its subcellular location is the virion. It localises to the host cytoplasm. It is found in the host cell membrane. The protein resides in the host nucleus. The protein localises to the virion membrane. It carries out the reaction Autocatalytic release of the core protein from the N-terminus of the togavirus structural polyprotein by hydrolysis of a -Trp-|-Ser- bond.. Forms an icosahedral capsid with a T=4 symmetry composed of 240 copies of the capsid protein surrounded by a lipid membrane through which penetrate 80 spikes composed of trimers of E1-E2 heterodimers. The capsid protein binds to the viral RNA genome at a site adjacent to a ribosome binding site for viral genome translation following genome release. Possesses a protease activity that results in its autocatalytic cleavage from the nascent structural protein. Following its self-cleavage, the capsid protein transiently associates with ribosomes, and within several minutes the protein binds to viral RNA and rapidly assembles into icosahedric core particles. The resulting nucleocapsid eventually associates with the cytoplasmic domain of the spike glycoprotein E2 at the cell membrane, leading to budding and formation of mature virions. In case of infection, new virions attach to target cells and after clathrin-mediated endocytosis their membrane fuses with the host endosomal membrane. This leads to the release of the nucleocapsid into the cytoplasm, followed by an uncoating event necessary for the genomic RNA to become accessible. The uncoating might be triggered by the interaction of capsid proteins with ribosomes. Binding of ribosomes would release the genomic RNA since the same region is genomic RNA-binding and ribosome-binding. Specifically inhibits interleukin-1 receptor-associated kinase 1/IRAK1-dependent signaling during viral entry, representing a means by which the alphaviruses may evade innate immune detection and activation prior to viral gene expression. Inhibits host transcription. Forms a tetrameric complex with XPO1/CRM1 and the nuclear import receptor importin. This complex blocks the central channel of host nuclear pores thereby inhibiting the receptor-mediated nuclear transport and thus the host mRNA and rRNA transcription. The inhibition of transcription is linked to a cytopathic effect on the host cell. In terms of biological role, provides the signal sequence for the translocation of the precursor of protein E3/E2 to the host endoplasmic reticulum. Furin-cleaved E3 remains associated with spike glycoprotein E1 and mediates pH protection of the latter during the transport via the secretory pathway. After virion release from the host cell, the assembly protein E3 is gradually released in the extracellular space. Its function is as follows. Plays a role in viral attachment to target host cell, by binding to the cell receptor LDLRAD3. Synthesized as a p62 precursor which is processed by furin at the cell membrane just before virion budding, giving rise to E2-E1 heterodimer. The p62-E1 heterodimer is stable, whereas E2-E1 is unstable and dissociate at low pH. p62 is processed at the last step, presumably to avoid E1 fusion activation before its final export to cell surface. E2 C-terminus contains a transitory transmembrane that would be disrupted by palmitoylation, resulting in reorientation of the C-terminal tail from lumenal to cytoplasmic side. This step is critical since E2 C-terminus is involved in budding by interacting with capsid proteins. This release of E2 C-terminus in cytoplasm occurs lately in protein export, and precludes premature assembly of particles at the endoplasmic reticulum membrane. Functionally, acts as a viroporin that participates in virus glycoprotein processing and transport to the plasma membrane, cell permeabilization and budding of viral particles. Disrupts the calcium homeostasis of the cell, probably at the endoplasmic reticulum level. This leads to cytoplasmic calcium elevation. Because of its lipophilic properties, the 6K protein is postulated to influence the selection of lipids that interact with the transmembrane domains of the glycoproteins, which, in turn, affects the deformability of the bilayer required for the extreme curvature that occurs as budding proceeds. Present in low amount in virions, about 3% compared to viral glycoproteins. Class II viral fusion protein. Fusion activity is inactive as long as E1 is bound to E2 in mature virion. After virus attachment to cell receptor LDLRAD3 and endocytosis, acidification of the endosome would induce dissociation of E1/E2 heterodimer and concomitant trimerization of the E1 subunits. This E1 trimer is fusion active, and promotes release of viral nucleocapsid in cytoplasm after endosome and viral membrane fusion. Efficient fusion requires the presence of cholesterol and sphingolipid in the target membrane. Fusion is optimal at levels of about 1 molecule of cholesterol per 2 molecules of phospholipids, and is specific for sterols containing a 3-beta-hydroxyl group. The sequence is that of Structural polyprotein from Bos taurus (Bovine).